Consider the following 388-residue polypeptide: 3-dehydroquinate synthase (388 aa).

NAD(+)-binding positions include Asp85–Lys90, Gly119–Asp123, Thr143–Thr144, Lys156, Lys165, and Thr183–Thr186. 3 residues coordinate Zn(2+): Glu198, His261, and His278.

Belongs to the sugar phosphate cyclases superfamily. Dehydroquinate synthase family. Requires Co(2+) as cofactor. Zn(2+) serves as cofactor. It depends on NAD(+) as a cofactor.

It localises to the cytoplasm. It catalyses the reaction 7-phospho-2-dehydro-3-deoxy-D-arabino-heptonate = 3-dehydroquinate + phosphate. The protein operates within metabolic intermediate biosynthesis; chorismate biosynthesis; chorismate from D-erythrose 4-phosphate and phosphoenolpyruvate: step 2/7. Catalyzes the conversion of 3-deoxy-D-arabino-heptulosonate 7-phosphate (DAHP) to dehydroquinate (DHQ). The polypeptide is 3-dehydroquinate synthase (Psychrobacter arcticus (strain DSM 17307 / VKM B-2377 / 273-4)).